The following is a 416-amino-acid chain: MSTPLQGIKVLDFTGVQSGPSCTQMLAWFGADVIKIERPGVGDVTRHQLRDIPDIDALYFTMLNSNKRSIELNTKTAEGKEVMEKLIREADILVENFHPGAIDHMGFTWEHIQEINPRLIFGSIKGFDECSPYVNVKAYENVAQAAGGAASTTGFWDGPPLVSAAALGDSNTGMHLLIGLLAALLHREKTGRGQRVTMSMQDAVLNLCRVKLRDQQRLDKLGYLEEYPQYPNGTFGDAVPRGGNAGGGGQPGWILKCKGWETDPNAYIYFTIQEQNWENTCKAIGKPEWITDPAYSTAHARQPHIFDIFAEIEKYTVTIDKHEAVAYLTQFDIPCAPVLSMKEISLDPSLRQSGSVVEVEQPLRGKYLTVGCPMKFSAFTPDIKAAPLLGEHTAAVLQELGYSDDEIAAMKQNHAI.

CoA contacts are provided by residues 17 to 18 (QS), arginine 38, 72 to 75 (LNTK), 96 to 98 (NFH), histidine 104, and 137 to 140 (KAYE). Aspartate 169 serves as the catalytic Nucleophile. 248–250 (GGQ) provides a ligand contact to substrate. Position 273 to 275 (273 to 275 (QEQ)) interacts with CoA.

It belongs to the CoA-transferase III family. Frc subfamily. In terms of assembly, homodimer.

The catalysed reaction is formyl-CoA + oxalate = oxalyl-CoA + formate. The protein operates within metabolic intermediate degradation; oxalate degradation; CO(2) and formate from oxalate: step 1/2. Involved in the catabolism of oxalate and in the adapatation to low pH via the induction of the oxalate-dependent acid tolerance response (ATR). Catalyzes the transfer of the CoA moiety from formyl-CoA to oxalate. This is Formyl-CoA:oxalate CoA-transferase from Escherichia coli (strain ATCC 8739 / DSM 1576 / NBRC 3972 / NCIMB 8545 / WDCM 00012 / Crooks).